A 1068-amino-acid polypeptide reads, in one-letter code: Retinoblastoma-like protein 1 (1068 aa).

Threonine 332 is subject to Phosphothreonine; by CDK2. Phosphothreonine; by CDK4 is present on threonine 369. Threonine 385 carries the phosphothreonine; by CDK2 modification. The tract at residues 385–584 is domain A; the sequence is TPVASATQSV…WEALQVSANK (200 aa). Positions 385–949 are pocket; binds T and E1A; sequence TPVASATQSV…GRVKSFALKY (565 aa). Positions 585–780 are spacer; it reads VPTCEEVIFP…AQEVHSTGIN (196 aa). Serine 640 bears the Phosphoserine; by CDK2 and CDK4 mark. 2 positions are modified to phosphoserine: serine 650 and serine 749. The residue at position 762 (serine 762) is a Phosphoserine; by CDK2. Positions 781 to 949 are domain B; it reads RPKRTGSLAL…GRVKSFALKY (169 aa). Phosphoserine; by CDK2 and CDK4 occurs at positions 964 and 975. A Phosphoserine; by CDK2 modification is found at serine 988. Threonine 997 is modified (phosphothreonine; by CDK2). Serine 1009 is subject to Phosphoserine; by CDK2. Serine 1041 is subject to Phosphoserine.

The protein belongs to the retinoblastoma protein (RB) family. In terms of assembly, component of the DREAM complex (also named LINC complex) at least composed of E2F4, E2F5, LIN9, LIN37, LIN52, LIN54, MYBL1, MYBL2, RBL1, RBL2, RBBP4, TFDP1 and TFDP2. The complex exists in quiescent cells where it represses cell cycle-dependent genes. It dissociates in S phase when LIN9, LIN37, LIN52 and LIN54 form a subcomplex that binds to MYBL2. Interacts with AATF. Interacts with KDM5A. Interacts with KMT5B and KMT5C. Interacts with USP4. Interacts with RBBP9. As to quaternary structure, (Microbial infection) Interacts with SV40 and JC virus large T antigens. Large T antigen, but not E1A, binds only to the unphosphorylated form. (Microbial infection) Interacts with JC virus small t antigen. Post-translationally, cell-cycle arrest properties are inactivated by phosphorylation on Thr-332, Ser-640, Ser-964 and Ser-975 by CDK4.

It localises to the nucleus. Its function is as follows. Key regulator of entry into cell division. Directly involved in heterochromatin formation by maintaining overall chromatin structure and, in particular, that of constitutive heterochromatin by stabilizing histone methylation. Recruits and targets histone methyltransferases KMT5B and KMT5C, leading to epigenetic transcriptional repression. Controls histone H4 'Lys-20' trimethylation. Probably acts as a transcription repressor by recruiting chromatin-modifying enzymes to promoters. Potent inhibitor of E2F-mediated trans-activation. May act as a tumor suppressor. This is Retinoblastoma-like protein 1 (RBL1) from Homo sapiens (Human).